We begin with the raw amino-acid sequence, 351 residues long: MNLVSLQNWLDNASFAVLFLTMLLYWIGAAFPGLPAINALGTAGMAIANLSIATLLGARWIEAGYFPLSNLYESLFFLSWGITTVHLIAENSSRSRLVGVFTTPVAMGIVAFATLTLPSDMQVSEPLVPALKSNWLMMHVSVMMLSYSALMVGSLLAIAFLVITRGNNIQLQGSSVGNGGYRTNGYRLMKAGELVSQPATPPVENNGFARLESQNNGNGNTAVLNLATTPQATTLTPTETLSPQRLSLAETLDNISYRIIGLGFPLLTIGIIAGAVWANEAWGSYWSWDPKETWALITWLVFAAYLHARITRGWQGRRPAILAASGFVVVWICYLGVNLLGKGLHSYGWFF.

The next 8 helical transmembrane spans lie at 17–37 (VLFLTMLLYWIGAAFPGLPAI), 38–58 (NALGTAGMAIANLSIATLLGA), 68–88 (LSNLYESLFFLSWGITTVHLI), 97–117 (LVGVFTTPVAMGIVAFATLTL), 143–163 (MMLSYSALMVGSLLAIAFLVI), 259–279 (IIGLGFPLLTIGIIAGAVWAN), 286–306 (WSWDPKETWALITWLVFAAYL), and 320–340 (AILAASGFVVVWICYLGVNLL).

It belongs to the CcmF/CycK/Ccl1/NrfE/CcsA family. As to quaternary structure, may interact with ccs1.

The protein resides in the cellular thylakoid membrane. Required during biogenesis of c-type cytochromes (cytochrome c6 and cytochrome f) at the step of heme attachment. In Trichormus variabilis (strain ATCC 29413 / PCC 7937) (Anabaena variabilis), this protein is Cytochrome c biogenesis protein CcsA.